Here is a 379-residue protein sequence, read N- to C-terminus: Mannitol-1-phosphate 5-dehydrogenase (379 aa).

3 to 14 (ALHFGAGNIGRG) contributes to the NAD(+) binding site.

The protein belongs to the mannitol dehydrogenase family.

It catalyses the reaction D-mannitol 1-phosphate + NAD(+) = beta-D-fructose 6-phosphate + NADH + H(+). The chain is Mannitol-1-phosphate 5-dehydrogenase from Actinobacillus pleuropneumoniae serotype 5b (strain L20).